We begin with the raw amino-acid sequence, 928 residues long: Type II inositol 3,4-bisphosphate 4-phosphatase (928 aa).

Basic and acidic residues predominate over residues 1–13 (MEIKEEGTSEEGQ). Disordered regions lie at residues 1-23 (MEIK…QAND), 481-516 (ILRK…HHSD), and 548-575 (SRND…LTSH). In terms of domain architecture, C2 spans 23-165 (DPEDIQFTSI…LKSKEQLLSL (143 aa)). 2 stretches are compositionally biased toward basic and acidic residues: residues 506-516 (RRQDSIPHHSD) and 548-563 (SRND…KDGD).

Belongs to the inositol 3,4-bisphosphate 4-phosphatase family.

It catalyses the reaction a 1,2-diacyl-sn-glycero-3-phospho-(1D-myo-inositol-3,4-bisphosphate) + H2O = a 1,2-diacyl-sn-glycero-3-phospho-(1D-myo-inositol-3-phosphate) + phosphate. It carries out the reaction 1D-myo-inositol 3,4-bisphosphate + H2O = 1D-myo-inositol 3-phosphate + phosphate. The catalysed reaction is 1D-myo-inositol 1,3,4-trisphosphate + H2O = 1D-myo-inositol 1,3-bisphosphate + phosphate. It participates in signal transduction; phosphatidylinositol signaling pathway. Strongly inhibited by inositol hexakisphosphate. Its function is as follows. Catalyzes the hydrolysis of the 4-position phosphate of phosphatidylinositol 3,4-bisphosphate, inositol 1,3,4-trisphosphate and inositol 3,4-bisphosphate. Plays a role in the late stages of macropinocytosis by dephosphorylating phosphatidylinositol 3,4-bisphosphate in membrane ruffles. The lipid phosphatase activity is critical for tumor suppressor function. Antagonizes the PI3K-AKT/PKB signaling pathway by dephosphorylating phosphoinositides and thereby modulating cell cycle progression and cell survival. This chain is Type II inositol 3,4-bisphosphate 4-phosphatase (Inpp4b), found in Rattus norvegicus (Rat).